The following is a 64-amino-acid chain: DNA gyrase inhibitor YacG (64 aa).

Positions 6, 9, 25, and 29 each coordinate Zn(2+).

Belongs to the DNA gyrase inhibitor YacG family. Interacts with GyrB. Zn(2+) is required as a cofactor.

In terms of biological role, inhibits all the catalytic activities of DNA gyrase by preventing its interaction with DNA. Acts by binding directly to the C-terminal domain of GyrB, which probably disrupts DNA binding by the gyrase. This is DNA gyrase inhibitor YacG from Haemophilus influenzae (strain ATCC 51907 / DSM 11121 / KW20 / Rd).